Reading from the N-terminus, the 302-residue chain is Nucleotide-binding protein Bamb_2855 (302 aa).

8–15 is a binding site for ATP; that stretch reads GISGSGKS. A GTP-binding site is contributed by 57–60; it reads DARS.

Belongs to the RapZ-like family.

Functionally, displays ATPase and GTPase activities. This chain is Nucleotide-binding protein Bamb_2855, found in Burkholderia ambifaria (strain ATCC BAA-244 / DSM 16087 / CCUG 44356 / LMG 19182 / AMMD) (Burkholderia cepacia (strain AMMD)).